A 1060-amino-acid polypeptide reads, in one-letter code: Outer capsid protein VP2 (1060 aa).

It belongs to the orbivirus VP2 family.

The protein resides in the virion. The VP2 protein is one of the two proteins (with VP5) which constitute the virus particle outer capsid. It is the major target of the host immunogenic response. The polypeptide is Outer capsid protein VP2 (Segment-2) (Camelus dromedarius (Dromedary)).